We begin with the raw amino-acid sequence, 299 residues long: MTGLRQIAFYGKGGIGKSTTSQNTLAALVEKGQKILIVGCDPKADSTRLILNAKAQDTVLSLAAEAGSVEDLELEEVLKIGYKGIKCVESGGPEPGVGCAGRGVITSINFLEENGAYDDVDYVSYDVLGDVVCGGFAMPIRENKAQEIYIVMSGEMMALYAANNIAKGILKYAHSGGVRLGGLICNERQTDRELDLAEALAKRLNSQLIHFVPRDNIVQHAELRRQTVIQYAPDSAQAGEYRKLAEKVHANAGKGTIPTPITMEELEQMLLDFGIMKTEEQQLAELAAKEAAKAAAALR.

Residue Gly11–Ser18 coordinates ATP. Cys99 is a [4Fe-4S] cluster binding site. The residue at position 102 (Arg102) is an ADP-ribosylarginine; by dinitrogenase reductase ADP-ribosyltransferase. Position 133 (Cys133) interacts with [4Fe-4S] cluster.

It belongs to the NifH/BchL/ChlL family. In terms of assembly, homodimer. [4Fe-4S] cluster is required as a cofactor. The reversible ADP-ribosylation of Arg-102 inactivates the nitrogenase reductase and regulates nitrogenase activity.

The catalysed reaction is N2 + 8 reduced [2Fe-2S]-[ferredoxin] + 16 ATP + 16 H2O = H2 + 8 oxidized [2Fe-2S]-[ferredoxin] + 2 NH4(+) + 16 ADP + 16 phosphate + 6 H(+). In terms of biological role, the key enzymatic reactions in nitrogen fixation are catalyzed by the nitrogenase complex, which has 2 components: the iron protein and the molybdenum-iron protein. This is Nitrogenase iron protein from Methylobacterium nodulans (strain LMG 21967 / CNCM I-2342 / ORS 2060).